A 354-amino-acid chain; its full sequence is Divinyl chlorophyll a/b light-harvesting protein PcbF (354 aa).

6 helical membrane passes run 27 to 47, 88 to 108, 140 to 160, 201 to 221, 248 to 268, and 315 to 335; these read FIAS…SNTL, VVTL…GGLL, FILG…VEWA, VMGG…FHAI, AILS…AFWC, and TANF…WHAL.

This sequence belongs to the PsbB/PsbC family. IsiA/Pcb subfamily. In terms of assembly, the antenna complex consists of divinyl chlorophylls (a and b) and divinyl chlorophyll a/b binding proteins and binds more divinyl chlorophyll b than does the antenna complex from high-light-adapted Prochlorococcus. Divinyl chlorophyll a is required as a cofactor. Divinyl chlorophyll b serves as cofactor.

It localises to the cellular thylakoid membrane. Its function is as follows. The antenna complex functions as a light receptor, it captures and delivers excitation energy to photosystems II and I. The Prochlorales pcb genes are not related to higher plant LHCs. The chain is Divinyl chlorophyll a/b light-harvesting protein PcbF (pcbF) from Prochlorococcus marinus (strain SARG / CCMP1375 / SS120).